Consider the following 490-residue polypeptide: Glutamyl-tRNA(Gln) amidotransferase subunit A (490 aa).

Catalysis depends on charge relay system residues K76 and S151. Catalysis depends on S175, which acts as the Acyl-ester intermediate.

It belongs to the amidase family. GatA subfamily. As to quaternary structure, heterotrimer of A, B and C subunits.

It catalyses the reaction L-glutamyl-tRNA(Gln) + L-glutamine + ATP + H2O = L-glutaminyl-tRNA(Gln) + L-glutamate + ADP + phosphate + H(+). Functionally, allows the formation of correctly charged Gln-tRNA(Gln) through the transamidation of misacylated Glu-tRNA(Gln) in organisms which lack glutaminyl-tRNA synthetase. The reaction takes place in the presence of glutamine and ATP through an activated gamma-phospho-Glu-tRNA(Gln). The polypeptide is Glutamyl-tRNA(Gln) amidotransferase subunit A (Methylobacillus flagellatus (strain ATCC 51484 / DSM 6875 / VKM B-1610 / KT)).